The chain runs to 49 residues: Osteocalcin (49 aa).

The 47-residue stretch at 1 to 47 (YLDHGLGAPAPYPDPLEPRREVCELNPDCDELADHIGFQEAYRRFYG) folds into the Gla domain. Pro9 bears the Hydroxyproline mark. Glu17, Glu21, Glu24, and Asp30 together coordinate Ca(2+). Glu17, Glu21, and Glu24 each carry 4-carboxyglutamate. An intrachain disulfide couples Cys23 to Cys29.

Belongs to the osteocalcin/matrix Gla protein family. Gamma-carboxyglutamate residues are formed by vitamin K dependent carboxylation by GGCX. These residues are essential for the binding of calcium. Decarboxylation promotes the hormone activity.

It localises to the secreted. In terms of biological role, the carboxylated form is one of the main organic components of the bone matrix, which constitutes 1-2% of the total bone protein. It acts as a negative regulator of bone formation and is required to limit bone formation without impairing bone resorption or mineralization. The carboxylated form binds strongly to apatite and calcium. Its function is as follows. The uncarboxylated form acts as a hormone secreted by osteoblasts, which regulates different cellular processes, such as energy metabolism, male fertility and brain development. Regulates of energy metabolism by acting as a hormone favoring pancreatic beta-cell proliferation, insulin secretion and sensitivity and energy expenditure. Uncarboxylated osteocalcin hormone also promotes testosterone production in the testes: acts as a ligand for G protein-coupled receptor GPRC6A at the surface of Leydig cells, initiating a signaling response that promotes the expression of enzymes required for testosterone synthesis in a CREB-dependent manner. Also acts as a regulator of brain development: osteocalcin hormone crosses the blood-brain barrier and acts as a ligand for GPR158 on neurons, initiating a signaling response that prevents neuronal apoptosis in the hippocampus, favors the synthesis of all monoamine neurotransmitters and inhibits that of gamma-aminobutyric acid (GABA). Osteocalcin also crosses the placenta during pregnancy and maternal osteocalcin is required for fetal brain development. The protein is Osteocalcin (BGLAP) of Sus scrofa (Pig).